The chain runs to 67 residues: Bowman-Birk type major trypsin inhibitor (67 aa).

Disulfide bonds link C8-C63, C9-C24, C14-C22, C31-C38, and C35-C51.

The protein belongs to the Bowman-Birk serine protease inhibitor family.

This chain is Bowman-Birk type major trypsin inhibitor, found in Setaria italica (Foxtail millet).